The sequence spans 509 residues: Transcription factor SOX-9 (509 aa).

Disordered stretches follow at residues 1 to 66 (MNLL…ESEE) and 160 to 271 (RLRV…IDFR). Residues 27-41 (SEGSRGSPCPSGSGS) show a composition bias toward low complexity. Residues 42–52 (DTENTRPQENT) are compositionally biased toward polar residues. Composition is skewed to basic and acidic residues over residues 56–66 (GEPDLKKESEE) and 160–174 (RLRVQHKKDHPDYKY). The segment at 63 to 103 (ESEEDKFPVCIREAVSQVLKGYDWTLVPMPVRVNGSSKNKP) is dimerization (DIM). The interval 63–103 (ESEEDKFPVCIREAVSQVLKGYDWTLVPMPVRVNGSSKNKP) is PQA. Phosphoserine is present on Ser-64. Residues 105–173 (VKRPMNAFMV…QHKKDHPDYK (69 aa)) constitute a DNA-binding region (HMG box). Ser-211 is modified (phosphoserine). A transactivation domain (TAM) region spans residues 224–307 (PGEHSGQSQG…LPPNGHPGVP (84 aa)). 2 consecutive short sequence motifs (9aaTAD) follow at residues 275–284 (IGELSSDVIS) and 290–298 (DVNEFDQYL). Disordered stretches follow at residues 335 to 415 (WMSK…QHSP) and 420 to 439 (YSPFNLPHYSPSYPPITRSQ). Over residues 341-359 (APPPPPHPPQQPPPVPQAP) the composition is skewed to pro residues. A compositionally biased stretch (low complexity) spans 360-369 (AQPQAALPQQ). Positions 380 to 415 (HTLTTLSSEPGQSQRTHIKTEQLSPSHYSEQQQHSP) are enriched in polar residues. Residues 394-509 (RTHIKTEQLS…QPVYTQLTRP (116 aa)) are transactivation domain (TAC). Lys-398 is covalently cross-linked (Glycyl lysine isopeptide (Lys-Gly) (interchain with G-Cter in ubiquitin)). The 9aaTAD 3 motif lies at 460 to 468 (SVLYSTFTY). A disordered region spans residues 479–509 (PIADTSGVPSIPQTHSPQHWEQPVYTQLTRP). A compositionally biased stretch (polar residues) spans 485-509 (GVPSIPQTHSPQHWEQPVYTQLTRP).

As to quaternary structure, homodimer; homodimerization is required for activity. Interacts (via C-terminus) with ZNF219; forming a complex that binds to the COL2A1 promoter and activates COL2A1 expression. Interacts with DDRGK1. Interacts with EP300/p300. Interacts with beta-catenin (CTNNB1); inhibiting CTNNB1 activity by competing with the binding sites of TCF/LEF within CTNNB1. Post-translationally, acetylated; acetylation impairs nuclear localization and ability to transactivate expression of target genes. Deacetylated by SIRT1. Phosphorylation at Ser-64 and Ser-211 by PKA increases transcriptional activity and may help delay chondrocyte maturation downstream of PTHLH/PTHrP signaling. Phosphorylation at either Ser-64 or Ser-211 is required for sumoylation, but phosphorylation is not dependent on sumoylation. Phosphorylated on tyrosine residues; tyrosine dephosphorylation by PTPN11/SHP2 blocks SOX9 phosphorylation by PKA and subsequent SUMOylation. In terms of processing, sumoylated; phosphorylation at either Ser-64 or Ser-211 is required for sumoylation. Sumoylation is induced by BMP signaling pathway. Post-translationally, ubiquitinated; ubiquitination leads to proteasomal degradation and is negatively regulated by DDRGK1.

The protein localises to the nucleus. In terms of biological role, transcription factor that plays a key role in chondrocytes differentiation and skeletal development. Specifically binds the 5'-ACAAAG-3' DNA motif present in enhancers and super-enhancers and promotes expression of genes important for chondrogenesis, including cartilage matrix protein-coding genes COL2A1, COL4A2, COL9A1, COL11A2 and ACAN, SOX5 and SOX6. Also binds to some promoter regions. Plays a central role in successive steps of chondrocyte differentiation. Absolutely required for precartilaginous condensation, the first step in chondrogenesis during which skeletal progenitors differentiate into prechondrocytes. Together with SOX5 and SOX6, required for overt chondrogenesis when condensed prechondrocytes differentiate into early stage chondrocytes, the second step in chondrogenesis. Later, required to direct hypertrophic maturation and block osteoblast differentiation of growth plate chondrocytes: maintains chondrocyte columnar proliferation, delays prehypertrophy and then prevents osteoblastic differentiation of chondrocytes by lowering beta-catenin (CTNNB1) signaling and RUNX2 expression. Also required for chondrocyte hypertrophy, both indirectly, by keeping the lineage fate of chondrocytes, and directly, by remaining present in upper hypertrophic cells and transactivating COL10A1 along with MEF2C. Low lipid levels are the main nutritional determinant for chondrogenic commitment of skeletal progenitor cells: when lipids levels are low, FOXO (FOXO1 and FOXO3) transcription factors promote expression of SOX9, which induces chondrogenic commitment and suppresses fatty acid oxidation. Mechanistically, helps, but is not required, to remove epigenetic signatures of transcriptional repression and deposit active promoter and enhancer marks at chondrocyte-specific genes. Acts in cooperation with the Hedgehog pathway-dependent GLI (GLI1 and GLI3) transcription factors. In addition to cartilage development, also acts as a regulator of proliferation and differentiation in epithelial stem/progenitor cells: involved in the lung epithelium during branching morphogenesis, by balancing proliferation and differentiation and regulating the extracellular matrix. Controls epithelial branching during kidney development. The polypeptide is Transcription factor SOX-9 (SOX9) (Sus scrofa (Pig)).